The primary structure comprises 180 residues: tRNA (cytidine(56)-2'-O)-methyltransferase (180 aa).

S-adenosyl-L-methionine-binding positions include leucine 84 and 112–116 (GAEKV).

The protein belongs to the aTrm56 family. Homodimer.

The protein resides in the cytoplasm. The enzyme catalyses cytidine(56) in tRNA + S-adenosyl-L-methionine = 2'-O-methylcytidine(56) in tRNA + S-adenosyl-L-homocysteine + H(+). In terms of biological role, specifically catalyzes the AdoMet-dependent 2'-O-ribose methylation of cytidine at position 56 in tRNAs. The chain is tRNA (cytidine(56)-2'-O)-methyltransferase from Natronomonas pharaonis (strain ATCC 35678 / DSM 2160 / CIP 103997 / JCM 8858 / NBRC 14720 / NCIMB 2260 / Gabara) (Halobacterium pharaonis).